A 530-amino-acid chain; its full sequence is Na(+)/H(+) antiporter NhaB (530 aa).

A run of 13 helical transmembrane segments spans residues 13-33 (FLGKAPDWYKITIISFLIINP), 34-54 (FVFFLVDPFVAGWLLVVEFIF), 64-84 (PLQPGGLLAIEAVAIGMTSPA), 90-110 (LVANIEVLLLLIFMVAGIYFM), 113-133 (LLLYIFTKILIGIRSKVLLSL), 136-156 (CLMAAFLSAFLDALTVIAVVI), 205-225 (LLMHAGIGTALGGVMTMVGEP), 234-254 (AGWLFGEFIIRMSPVTVPVFM), 306-326 (ALIAVWLIVGLAMHLAAVGLI), 351-371 (EEALPFTALLAVFFSIVAVII), 378-400 (PIISWVLTLNGNAQMTMFYIANG), 450-470 (ATPNGQAAFLFVLTSALAPLI), and 481-501 (ALPYTIVLALVGLAGIEFMLL).

Belongs to the NhaB Na(+)/H(+) (TC 2.A.34) antiporter family.

The protein localises to the cell inner membrane. It catalyses the reaction 2 Na(+)(in) + 3 H(+)(out) = 2 Na(+)(out) + 3 H(+)(in). Functionally, na(+)/H(+) antiporter that extrudes sodium in exchange for external protons. The polypeptide is Na(+)/H(+) antiporter NhaB (Photobacterium profundum (strain SS9)).